Consider the following 1077-residue polypeptide: METSKNPSDLPKKPANVKKNRRRFQKSQKKSISPSSGSELPNFKTTISQNNEEVKTSLKEDSSKFHPSASAPIFVPTSSVQLNVSKNNGHKASDIVDAVSSKDEELRKHAKGEGKRSKNRKRSSKHSEKQAVDLKSSNSSQETSSSKGSVNNKSERSREAKSRMPKNSKEIKKGLDLSKLDMTSRMIVELKNRLYECSVCTDTINPSTSIWSCGTCYHVFHLSCIRKWCKNSIEQRNEDAWRCPYCQSNQTETSLHYLCWCGKQEKPEFVKNLVPHSCGDPCGKTRGQDCEHPCPLLCHPGPCPPCTATVEKFCLCGKESIHARCSNISKVNTEPFRCENVCDELLPCGEHTCKKRCHSGLCGACFEPINAKCYCGLHSKTYPCSSLPSPSISKKDENGSVKEWFGYYSCNNPCTLFFDCGLHKCSKTCHPISETRAHCPFATDVLTKCPCGKEDISFLLKGHERKSCSDPIPTCENICGKLLSCGHRCKYKCHLGSCGTCSETLTIPCRCTANEVQVTCEQLQNGFIPTCERLCTILLSCGRHQCNKKCCSGYSKAQTRLARRPKGAKLRYHLLTEEFEEEHICFRPCNKKLSCGNHFCQHMCHRGPCPRCLEASFEELPCTCGRTRLYPPVACGTPIPDCPYLCVLPKSCHHPQVKHNCHPTSEPCPPCPYFVKKRCLCGKHILENQPCYRENVRCGELCNKLLSCKTHFCEKLCHPDGECESSCKKECGKRRMYCEHVCQSPCHAGHPCDERIPCKAPLEVSCECGRIRKKVTCDASYDNPDPQHKVSCTLECSQQQRNKLFAEALNIKTDRRSNDVAQYTKSLLVFYGKHSDFADEVESLLRNFVNNKASSFRFPSMRREQRAFVHMFAKLLGLESVSFDPEPKRNVMVYNKGEAKLPNMLLKEANLYHLQHPEIPLKPDSLLGPEEENATASHIDGSSNASDSGYNAFVLKELLKEVNDESAIFSVLDDIVDFNHLTWSILFGENYIILKPLNTDLIVNKTGKLVALRPLVNRRLADAGIASRCEICEINDKNEIVKTRSQRIHSKKKAFLSLVPDKSIGVINRYKELATEL.

The segment at 1–173 (METSKNPSDL…MPKNSKEIKK (173 aa)) is disordered. Basic residues predominate over residues 15–29 (ANVKKNRRRFQKSQK). Ser-33 carries the phosphoserine modification. Basic and acidic residues predominate over residues 52 to 64 (EEVKTSLKEDSSK). The span at 76–87 (PTSSVQLNVSKN) shows a compositional bias: polar residues. Over residues 100-116 (SSKDEELRKHAKGEGKR) the composition is skewed to basic and acidic residues. Residues 136 to 149 (SSNSSQETSSSKGS) show a composition bias toward low complexity. Residues 153–173 (KSERSREAKSRMPKNSKEIKK) show a composition bias toward basic and acidic residues. Residues 197–247 (CSVCTDTINPSTSIWSCGTCYHVFHLSCIRKWCKNSIEQRNEDAWRCPYCQ) form an RING-type; atypical zinc finger. 8 consecutive NF-X1-type zinc fingers follow at residues 290–308 (CEHP…PCTA), 348–367 (CGEH…ACFE), 420–441 (CGLH…HCPF), 485–503 (CGHR…TCSE), 541–558 (CGRH…SKAQ), 595–614 (CGNH…RCLE), 708–729 (CKTH…SCKK), and 738–760 (CEHV…PCKA). One can recognise an R3H domain in the interval 835-897 (SDFADEVESL…KRNVMVYNKG (63 aa)).

It belongs to the NFX1 family.

It is found in the cytoplasm. Its subcellular location is the golgi apparatus. It localises to the nucleus. In terms of biological role, may play a role in transcription regulation. The polypeptide is FKBP12-associated protein 1 homolog (fap1) (Schizosaccharomyces pombe (strain 972 / ATCC 24843) (Fission yeast)).